The chain runs to 141 residues: Methylglyoxal synthase (141 aa).

In terms of domain architecture, MGS-like spans 1–141 (MNIALIAHDK…PKLQKNKSDK (141 aa)). Residues His8, Lys12, and 34 to 37 (TGTT) contribute to the substrate site. The Proton donor/acceptor role is filled by Asp60. Position 87 (His87) interacts with substrate.

This sequence belongs to the methylglyoxal synthase family.

The catalysed reaction is dihydroxyacetone phosphate = methylglyoxal + phosphate. Catalyzes the formation of methylglyoxal from dihydroxyacetone phosphate. This Caldicellulosiruptor bescii (strain ATCC BAA-1888 / DSM 6725 / KCTC 15123 / Z-1320) (Anaerocellum thermophilum) protein is Methylglyoxal synthase.